A 264-amino-acid chain; its full sequence is Somatomedin-B and thrombospondin type-1 domain-containing protein (264 aa).

Positions 1 to 20 are cleaved as a signal peptide; it reads MRTLWMALCVLARLWPGALA. The SMB domain occupies 24-75; sequence DAGRCCPGRDPACFASGWRQDRVYGTCFCDQACRLTGDCCFDYARACPARPC. Cystine bridges form between Cys28–Cys36, Cys28–Cys52, Cys36–Cys70, Cys50–Cys52, Cys50–Cys63, Cys56–Cys62, and Cys63–Cys70. The region spanning 74-127 is the TSP type-1 domain; it reads PCIVGEWSPWSGCASQCRPTARVRRRAVQQEPQNGGEPCPALEERAGCLEYATP. A glycan (N-linked (GlcNAc...) asparagine) is linked at Asn227.

The protein belongs to the thrombospondin family.

It is found in the secreted. The protein resides in the extracellular space. The protein localises to the extracellular matrix. The polypeptide is Somatomedin-B and thrombospondin type-1 domain-containing protein (SBSPON) (Bos taurus (Bovine)).